A 1065-amino-acid chain; its full sequence is Ceruloplasmin (1065 aa).

Residues 1–19 form the signal peptide; that stretch reads MKILILGIFLFLCSTPAWA. Plastocyanin-like domains lie at 20 to 200 and 209 to 357; these read KEKH…LIIC and KEKH…VQEC. 3 residues coordinate Na(+): Tyr55, Gly64, and Tyr67. Cu(2+) contacts are provided by His120 and His122. An O2-binding site is contributed by His120. Lys128 lines the Ca(2+) pocket. The N-linked (GlcNAc...) (complex) asparagine glycan is linked to Asn138. The Ca(2+) site is built by Gln143, Asp146, and Asp147. Cys174 and Cys200 are oxidised to a cystine. 2 residues coordinate Cu(2+): His180 and His182. His180 contributes to the O2 binding site. Ser256 provides a ligand contact to Na(+). Cys276 and Cys357 are joined by a disulfide. Cu(2+) is bound by residues His295, Cys338, and His343. N-linked (GlcNAc...) (complex) asparagine glycans are attached at residues Asn358 and Asn397. 2 Plastocyanin-like domains span residues 370 to 560 and 570 to 718; these read HVRH…MKIC and RQKD…VNQC. Positions 408, 417, and 420 each coordinate Na(+). Cys534 and Cys560 are oxidised to a cystine. N-linked (GlcNAc...) asparagine glycosylation occurs at Asn588. Residue Ser617 participates in Na(+) binding. Cys637 and Cys718 form a disulfide bridge. Cu(2+)-binding residues include His656, Cys699, His704, and Met709. Residue Cys699 is the Nucleophile; for glutathione peroxidase activity of the active site. Ser722 is subject to Phosphoserine; by FAM20C. 2 Plastocyanin-like domains span residues 730–900 and 908–1061; these read GERT…LIVC and FNPR…QNED. An N-linked (GlcNAc...) (complex) asparagine glycan is attached at Asn762. Na(+) contacts are provided by Phe767, Gly776, and Tyr779. A disulfide bridge connects residues Cys874 and Cys900. Residue Asn926 is glycosylated (N-linked (GlcNAc...) asparagine). Ser955 provides a ligand contact to Na(+). The Cu(2+) site is built by His994, His997, His999, His1039, Cys1040, His1041, His1045, and Met1050. The O2 site is built by His997 and His999. Residue His1041 coordinates O2.

It belongs to the multicopper oxidase family. As to quaternary structure, found in a complex with MPO and LTF; interacts directly with MPO and LTF, which allows Fe(3+) incorporation into LTF, activation of CP ferroxidase activity and protection of CP antioxidant properties by MPO. The cofactor is Cu(2+). As to expression, expressed by the liver and secreted in plasma.

It is found in the secreted. The enzyme catalyses 4 Fe(2+) + O2 + 4 H(+) = 4 Fe(3+) + 2 H2O. The catalysed reaction is 4 Cu(+) + O2 + 4 H(+) = 4 Cu(2+) + 2 H2O. It catalyses the reaction a hydroperoxide + 2 glutathione = an alcohol + glutathione disulfide + H2O. It carries out the reaction 4 nitric oxide + O2 + 2 H2O = 4 nitrite + 4 H(+). The enzyme catalyses 2 glutathione + H2O2 = glutathione disulfide + 2 H2O. Its function is as follows. Multifunctional blue, copper-binding (6-7 atoms per molecule) glycoprotein. It has ferroxidase activity oxidizing Fe(2+) to Fe(3+) without releasing radical oxygen species. It is involved in iron transport across the cell membrane. Copper ions provide a large number of enzymatic activites. Oxidizes highly toxic ferrous ions to the ferric state for further incorporation onto apo-transferrins, catalyzes Cu(+) oxidation and promotes the oxidation of biogenic amines such as norepinephrin and serotonin. Provides Cu(2+) ions for the ascorbate-mediated deaminase degradation of the heparan sulfate chains of GPC1. Has glutathione peroxidase-like activity, can remove both hydrogen peroxide and lipid hydroperoxide in the presence of thiols. Also shows NO-oxidase and NO2 synthase activities that determine endocrine NO homeostasis. The protein is Ceruloplasmin of Homo sapiens (Human).